The following is a 221-amino-acid chain: Glutathione S-transferase A3 (221 aa).

Ala-2 carries the N-acetylalanine modification. Residues 3–83 form the GST N-terminal domain; sequence GKPVLHYFDG…YIASKYNLYG (81 aa). Lys-4 carries the post-translational modification N6-succinyllysine. Residues Tyr-9, Arg-45, 54–55, and 67–68 each bind glutathione; these read QV and QT. One can recognise a GST C-terminal domain in the interval 85–207; that stretch reads DMKERAIIDM…LQPGSQRKPF (123 aa).

In terms of assembly, homodimer.

It localises to the cytoplasm. The enzyme catalyses RX + glutathione = an S-substituted glutathione + a halide anion + H(+). It catalyses the reaction androst-5-ene-3,17-dione = androst-4-ene-3,17-dione. It carries out the reaction pregn-5-ene-3,20-dione = progesterone. Its function is as follows. Conjugation of reduced glutathione to a wide number of exogenous and endogenous hydrophobic electrophiles. Catalyzes isomerization reactions that contribute to the biosynthesis of steroid hormones. Efficiently catalyze obligatory double-bond isomerizations of delta(5)-androstene-3,17-dione and delta(5)-pregnene-3,20-dione, precursors to testosterone and progesterone, respectively. Has a high catalytic activity for aflatoxin B1-8,9 epoxide. This chain is Glutathione S-transferase A3, found in Mus musculus (Mouse).